Consider the following 443-residue polypeptide: MAKYTKEDIINLVKENGVKFIRLQFTDIFGTLKNVAITDKQLEKALDNECMFDGSSIDGFVRIEESDMNLRPNLDSFVIFPWRPQQGKVARLICDVYKPDGTPFEGDPRHVLKRANADAKELGYTMNVGPECEFFLFETDENGRATTNTQDKAGYFDLAPTDLGENARRDMTLALEEMGFEIEASHHEVAEGQNEIDFKYGDALTTADNIMTFKLVVKSIAQRHGLHASFMPKPIFGINGSGMHVNMSLFKDGKNAFVDENDKNGLSKVAYQFIAGLLKNIKGMAAVTNPLVNSYKRLVPGYEAPVYLAWSCKNRTALIRVPAARGAGTRVELRCPDPSSNPYLVLACLLQAGLDGIKNNLQPPAEVEANIFAMTEQERKENGIDNLPNNLYEAVNYMKENELAKKALGDHVYGNYVAGKAAEWDDYRTKVHDWELENYLNKY.

Positions 16–101 (NGVKFIRLQF…LICDVYKPDG (86 aa)) constitute a GS beta-grasp domain. Positions 108–443 (PRHVLKRANA…WELENYLNKY (336 aa)) constitute a GS catalytic domain. Residues glutamate 131 and glutamate 133 each coordinate Mg(2+). Position 183 (glutamate 183) interacts with ATP. Mg(2+)-binding residues include glutamate 188 and glutamate 195. Residues 239 to 240 (NG) and glycine 240 contribute to the L-glutamate site. Mg(2+) is bound at residue histidine 244. An ATP-binding site is contributed by serine 248. L-glutamate-binding residues include arginine 297, glutamate 303, and arginine 315. Positions 315 and 320 each coordinate ATP. Glutamate 332 contributes to the Mg(2+) binding site. Arginine 334 lines the L-glutamate pocket.

The protein belongs to the glutamine synthetase family. In terms of assembly, oligomer of 12 subunits arranged in the form of two hexagons. In its feedback-inhibited form, interacts with TnrA in order to block its DNA-binding activity. It depends on Mg(2+) as a cofactor.

It is found in the cytoplasm. The catalysed reaction is L-glutamate + NH4(+) + ATP = L-glutamine + ADP + phosphate + H(+). Its activity is regulated as follows. Inhibited by glutamine. Its function is as follows. Glutamine synthetase (GS) is an unusual multitasking protein that functions as an enzyme, a transcription coregulator, and a chaperone in ammonium assimilation and in the regulation of genes involved in nitrogen metabolism. It catalyzes the ATP-dependent biosynthesis of glutamine from glutamate and ammonia. Feedback-inhibited GlnA also interacts with and regulates the activity of the transcriptional regulator TnrA. During nitrogen limitation, TnrA is in its DNA-binding active state and turns on the transcription of genes required for nitrogen assimilation. Under conditions of nitrogen excess, feedback-inhibited GlnA forms a stable complex with TnrA, which inhibits its DNA-binding activity. In contrast, feedback-inhibited GlnA acts as a chaperone to stabilize the DNA-binding activity of GlnR, which represses the transcription of nitrogen assimilation genes. The polypeptide is Glutamine synthetase (Clostridium saccharobutylicum).